A 159-amino-acid chain; its full sequence is Putative ribosomal RNA large subunit methyltransferase H (159 aa).

Residues Leu-76, Gly-108, and 127–132 (LSPLTF) each bind S-adenosyl-L-methionine.

The protein belongs to the RNA methyltransferase RlmH family.

The protein localises to the cytoplasm. It carries out the reaction pseudouridine(1915) in 23S rRNA + S-adenosyl-L-methionine = N(3)-methylpseudouridine(1915) in 23S rRNA + S-adenosyl-L-homocysteine + H(+). In terms of biological role, specifically methylates the pseudouridine at position 1915 (m3Psi1915) in 23S rRNA. The protein is Putative ribosomal RNA large subunit methyltransferase H of Methanoregula boonei (strain DSM 21154 / JCM 14090 / 6A8).